The chain runs to 293 residues: Acetyl-coenzyme A carboxylase carboxyl transferase subunit beta (293 aa).

The region spanning 29–293 (LWVKCSECSQ…GVKELAEANI (265 aa)) is the CoA carboxyltransferase N-terminal domain. Zn(2+) contacts are provided by Cys-33, Cys-36, Cys-52, and Cys-55. A C4-type zinc finger spans residues 33-55 (CSECSQVAYRKDLISNFNVCSNC).

The protein belongs to the AccD/PCCB family. Acetyl-CoA carboxylase is a heterohexamer composed of biotin carboxyl carrier protein (AccB), biotin carboxylase (AccC) and two subunits each of ACCase subunit alpha (AccA) and ACCase subunit beta (AccD). The cofactor is Zn(2+).

It is found in the cytoplasm. The enzyme catalyses N(6)-carboxybiotinyl-L-lysyl-[protein] + acetyl-CoA = N(6)-biotinyl-L-lysyl-[protein] + malonyl-CoA. Its pathway is lipid metabolism; malonyl-CoA biosynthesis; malonyl-CoA from acetyl-CoA: step 1/1. In terms of biological role, component of the acetyl coenzyme A carboxylase (ACC) complex. Biotin carboxylase (BC) catalyzes the carboxylation of biotin on its carrier protein (BCCP) and then the CO(2) group is transferred by the transcarboxylase to acetyl-CoA to form malonyl-CoA. This Prochlorococcus marinus (strain MIT 9312) protein is Acetyl-coenzyme A carboxylase carboxyl transferase subunit beta.